Consider the following 173-residue polypeptide: Mediator of RNA polymerase II transcription subunit 10 (173 aa).

Residues 1–20 (MDPNSPMFQNTPQQPMSLQR) are compositionally biased toward polar residues. Residues 1–45 (MDPNSPMFQNTPQQPMSLQRSVDDRIDRERTAKKEKDDEKKKQED) form a disordered region. Basic and acidic residues predominate over residues 21 to 45 (SVDDRIDRERTAKKEKDDEKKKQED).

The protein belongs to the Mediator complex subunit 10 family. Component of the Mediator complex.

The protein resides in the nucleus. Its function is as follows. Component of the Mediator complex, a coactivator involved in the regulated transcription of nearly all RNA polymerase II-dependent genes. Mediator functions as a bridge to convey information from gene-specific regulatory proteins to the basal RNA polymerase II transcription machinery. Mediator is recruited to promoters by direct interactions with regulatory proteins and serves as a scaffold for the assembly of a functional preinitiation complex with RNA polymerase II and the general transcription factors. The polypeptide is Mediator of RNA polymerase II transcription subunit 10 (mdt-10) (Caenorhabditis briggsae).